We begin with the raw amino-acid sequence, 347 residues long: Dihydroorotate dehydrogenase (quinone) (347 aa).

FMN contacts are provided by residues 62-66 (AGLDK) and Ala-86. Residue Lys-66 participates in substrate binding. 111 to 115 (NRMGF) is a binding site for substrate. 2 residues coordinate FMN: Asn-139 and Asn-172. Asn-172 lines the substrate pocket. Catalysis depends on Ser-175, which acts as the Nucleophile. Asn-177 is a substrate binding site. Positions 217 and 245 each coordinate FMN. Residue 246-247 (NT) coordinates substrate. FMN is bound by residues Gly-268, Gly-297, and 318 to 319 (YT).

This sequence belongs to the dihydroorotate dehydrogenase family. Type 2 subfamily. Monomer. It depends on FMN as a cofactor.

It localises to the cell membrane. It catalyses the reaction (S)-dihydroorotate + a quinone = orotate + a quinol. It functions in the pathway pyrimidine metabolism; UMP biosynthesis via de novo pathway; orotate from (S)-dihydroorotate (quinone route): step 1/1. Catalyzes the conversion of dihydroorotate to orotate with quinone as electron acceptor. The chain is Dihydroorotate dehydrogenase (quinone) from Coxiella burnetii (strain CbuK_Q154) (Coxiella burnetii (strain Q154)).